The chain runs to 238 residues: tRNA (guanine-N(7)-)-methyltransferase (238 aa).

S-adenosyl-L-methionine is bound by residues E68, E93, D120, and D143. D143 is a catalytic residue. Residues K147, D179, and 216-219 (TKFE) contribute to the substrate site.

The protein belongs to the class I-like SAM-binding methyltransferase superfamily. TrmB family.

The enzyme catalyses guanosine(46) in tRNA + S-adenosyl-L-methionine = N(7)-methylguanosine(46) in tRNA + S-adenosyl-L-homocysteine. The protein operates within tRNA modification; N(7)-methylguanine-tRNA biosynthesis. In terms of biological role, catalyzes the formation of N(7)-methylguanine at position 46 (m7G46) in tRNA. The protein is tRNA (guanine-N(7)-)-methyltransferase of Shewanella woodyi (strain ATCC 51908 / MS32).